A 512-amino-acid polypeptide reads, in one-letter code: Glycine betaine transporter OpuD (512 aa).

The next 12 membrane-spanning stretches (helical) occupy residues 5–25 (ISSV…WGVI), 45–65 (FGWY…FLIF), 82–102 (FGLL…GLVF), 135–155 (FFHW…CIAY), 186–206 (IDCI…GLGA), 222–242 (AFIV…LSAW), 257–277 (MVLA…VLIM), 312–332 (WTIF…IFIA), 343–363 (FLIG…SIFG), 395–415 (LTMV…ITSA), 441–461 (WGII…LAAL), and 464–484 (TAIL…ASLY).

This sequence belongs to the BCCT transporter (TC 2.A.15) family.

Its subcellular location is the cell membrane. With respect to regulation, activity is stimulated by high osmolarity. High-affinity uptake of glycine betaine. Does not mediate either carnitine or choline uptake. This is Glycine betaine transporter OpuD (opuD) from Bacillus subtilis (strain 168).